The primary structure comprises 159 residues: Nucleotide-binding protein PSPTO_4393 (159 aa).

It belongs to the YajQ family.

Nucleotide-binding protein. This chain is Nucleotide-binding protein PSPTO_4393, found in Pseudomonas syringae pv. tomato (strain ATCC BAA-871 / DC3000).